A 56-amino-acid polypeptide reads, in one-letter code: Large ribosomal subunit protein bL32 (56 aa).

Residues 1-35 are disordered; it reads MAVQQNKSTRSKRGMRRSHHALRSVTISVDRTSGE. The span at 9-22 shows a compositional bias: basic residues; the sequence is TRSKRGMRRSHHAL.

It belongs to the bacterial ribosomal protein bL32 family.

In Blochmanniella pennsylvanica (strain BPEN), this protein is Large ribosomal subunit protein bL32.